Consider the following 173-residue polypeptide: Crossover junction endodeoxyribonuclease RuvC (173 aa).

Active-site residues include Asp-8, Glu-67, and Asp-139. 3 residues coordinate Mg(2+): Asp-8, Glu-67, and Asp-139.

Belongs to the RuvC family. Homodimer which binds Holliday junction (HJ) DNA. The HJ becomes 2-fold symmetrical on binding to RuvC with unstacked arms; it has a different conformation from HJ DNA in complex with RuvA. In the full resolvosome a probable DNA-RuvA(4)-RuvB(12)-RuvC(2) complex forms which resolves the HJ. It depends on Mg(2+) as a cofactor.

Its subcellular location is the cytoplasm. The catalysed reaction is Endonucleolytic cleavage at a junction such as a reciprocal single-stranded crossover between two homologous DNA duplexes (Holliday junction).. Its function is as follows. The RuvA-RuvB-RuvC complex processes Holliday junction (HJ) DNA during genetic recombination and DNA repair. Endonuclease that resolves HJ intermediates. Cleaves cruciform DNA by making single-stranded nicks across the HJ at symmetrical positions within the homologous arms, yielding a 5'-phosphate and a 3'-hydroxyl group; requires a central core of homology in the junction. The consensus cleavage sequence is 5'-(A/T)TT(C/G)-3'. Cleavage occurs on the 3'-side of the TT dinucleotide at the point of strand exchange. HJ branch migration catalyzed by RuvA-RuvB allows RuvC to scan DNA until it finds its consensus sequence, where it cleaves and resolves the cruciform DNA. The chain is Crossover junction endodeoxyribonuclease RuvC from Vibrio vulnificus (strain CMCP6).